The following is a 232-amino-acid chain: Ubiquinone biosynthesis O-methyltransferase (232 aa).

S-adenosyl-L-methionine contacts are provided by R36, G55, D76, and L120.

Belongs to the methyltransferase superfamily. UbiG/COQ3 family.

The catalysed reaction is a 3-demethylubiquinol + S-adenosyl-L-methionine = a ubiquinol + S-adenosyl-L-homocysteine + H(+). It carries out the reaction a 3-(all-trans-polyprenyl)benzene-1,2-diol + S-adenosyl-L-methionine = a 2-methoxy-6-(all-trans-polyprenyl)phenol + S-adenosyl-L-homocysteine + H(+). It participates in cofactor biosynthesis; ubiquinone biosynthesis. Its function is as follows. O-methyltransferase that catalyzes the 2 O-methylation steps in the ubiquinone biosynthetic pathway. The protein is Ubiquinone biosynthesis O-methyltransferase of Pseudomonas savastanoi pv. phaseolicola (strain 1448A / Race 6) (Pseudomonas syringae pv. phaseolicola (strain 1448A / Race 6)).